We begin with the raw amino-acid sequence, 89 residues long: GTP cyclohydrolase 1 feedback regulatory protein (89 aa).

The protein belongs to the GFRP family. As to quaternary structure, homopentamer. Forms a complex with GCH1 where a GCH1 homodecamer is sandwiched by two GFRP homopentamers.

It is found in the nucleus. The protein resides in the nucleus membrane. The protein localises to the cytoplasm. Its subcellular location is the cytosol. Functionally, mediates tetrahydrobiopterin inhibition of GTP cyclohydrolase 1. The polypeptide is GTP cyclohydrolase 1 feedback regulatory protein (gchfr) (Danio rerio (Zebrafish)).